Reading from the N-terminus, the 354-residue chain is Holliday junction branch migration complex subunit RuvB (354 aa).

The segment at 4–190 is large ATPase domain (RuvB-L); sequence TDKLAAERII…FGIVARLEFY (187 aa). Residues Leu29, Arg30, Gly71, Lys74, Thr75, Thr76, 137 to 139, Arg180, Tyr190, and Arg227 each bind ATP; that span reads EDY. Position 75 (Thr75) interacts with Mg(2+). Residues 191-261 are small ATPAse domain (RuvB-S); it reads NAEELARIVT…VADAALKMLD (71 aa). Residues 264–354 form a head domain (RuvB-H) region; the sequence is AVGFDLMDRK…LPGLWDSAAT (91 aa). Residues Arg300, Arg319, and Arg324 each coordinate DNA.

It belongs to the RuvB family. Homohexamer. Forms an RuvA(8)-RuvB(12)-Holliday junction (HJ) complex. HJ DNA is sandwiched between 2 RuvA tetramers; dsDNA enters through RuvA and exits via RuvB. An RuvB hexamer assembles on each DNA strand where it exits the tetramer. Each RuvB hexamer is contacted by two RuvA subunits (via domain III) on 2 adjacent RuvB subunits; this complex drives branch migration. In the full resolvosome a probable DNA-RuvA(4)-RuvB(12)-RuvC(2) complex forms which resolves the HJ.

It is found in the cytoplasm. The catalysed reaction is ATP + H2O = ADP + phosphate + H(+). The RuvA-RuvB-RuvC complex processes Holliday junction (HJ) DNA during genetic recombination and DNA repair, while the RuvA-RuvB complex plays an important role in the rescue of blocked DNA replication forks via replication fork reversal (RFR). RuvA specifically binds to HJ cruciform DNA, conferring on it an open structure. The RuvB hexamer acts as an ATP-dependent pump, pulling dsDNA into and through the RuvAB complex. RuvB forms 2 homohexamers on either side of HJ DNA bound by 1 or 2 RuvA tetramers; 4 subunits per hexamer contact DNA at a time. Coordinated motions by a converter formed by DNA-disengaged RuvB subunits stimulates ATP hydrolysis and nucleotide exchange. Immobilization of the converter enables RuvB to convert the ATP-contained energy into a lever motion, pulling 2 nucleotides of DNA out of the RuvA tetramer per ATP hydrolyzed, thus driving DNA branch migration. The RuvB motors rotate together with the DNA substrate, which together with the progressing nucleotide cycle form the mechanistic basis for DNA recombination by continuous HJ branch migration. Branch migration allows RuvC to scan DNA until it finds its consensus sequence, where it cleaves and resolves cruciform DNA. The protein is Holliday junction branch migration complex subunit RuvB of Paraburkholderia phytofirmans (strain DSM 17436 / LMG 22146 / PsJN) (Burkholderia phytofirmans).